A 363-amino-acid chain; its full sequence is Chorismate synthase (363 aa).

The tract at residues 36–58 (SESDIQGDLDRRRPGQSKITTPR) is disordered. R47 is a binding site for NADP(+). FMN is bound by residues 124 to 126 (RSS), G286, 301 to 305 (KPTAT), and R327.

This sequence belongs to the chorismate synthase family. In terms of assembly, homotetramer. Requires FMNH2 as cofactor.

It carries out the reaction 5-O-(1-carboxyvinyl)-3-phosphoshikimate = chorismate + phosphate. It participates in metabolic intermediate biosynthesis; chorismate biosynthesis; chorismate from D-erythrose 4-phosphate and phosphoenolpyruvate: step 7/7. Catalyzes the anti-1,4-elimination of the C-3 phosphate and the C-6 proR hydrogen from 5-enolpyruvylshikimate-3-phosphate (EPSP) to yield chorismate, which is the branch point compound that serves as the starting substrate for the three terminal pathways of aromatic amino acid biosynthesis. This reaction introduces a second double bond into the aromatic ring system. The protein is Chorismate synthase of Crocosphaera subtropica (strain ATCC 51142 / BH68) (Cyanothece sp. (strain ATCC 51142)).